Consider the following 220-residue polypeptide: MHLSSPALPIGGFSYSQGLEAAIELGLVHDEASTLAWIESQLVTVMARAEAPLWCLLFEAWRAGDDAAAHGWNQWFHASRETRELRQETEQMGRSLARLAQELGWGTAATRAAVAALRPATLPAVHACACAMWALPREAGLGAYVFSWLENQVAAAIKGVPLGQMAGQRMLERLRAGLPAVLADARARAGATPPRLDTFAPQYAMVSARHETQFSRLFRS.

Belongs to the UreF family. In terms of assembly, ureD, UreF and UreG form a complex that acts as a GTP-hydrolysis-dependent molecular chaperone, activating the urease apoprotein by helping to assemble the nickel containing metallocenter of UreC. The UreE protein probably delivers the nickel.

Its subcellular location is the cytoplasm. Required for maturation of urease via the functional incorporation of the urease nickel metallocenter. The polypeptide is Urease accessory protein UreF (Bordetella bronchiseptica (strain ATCC BAA-588 / NCTC 13252 / RB50) (Alcaligenes bronchisepticus)).